Here is a 447-residue protein sequence, read N- to C-terminus: Dimethylsulfoniopropionate lyase DddP (447 aa).

The segment at 1 to 26 is disordered; sequence MNRHFNATRKIDPSRGATLGDGSPND. Residues D295, D297, D307, H371, E406, and E421 each contribute to the a divalent metal cation site.

This sequence belongs to the peptidase M24B family. In terms of assembly, homodimer. It depends on a divalent metal cation as a cofactor.

It carries out the reaction S,S-dimethyl-beta-propiothetin = acrylate + dimethyl sulfide + H(+). In terms of biological role, able to cleave dimethylsulfoniopropionate (DMSP), releasing dimethyl sulfide (DMS). DMS is the principal form by which sulfur is transported from oceans to the atmosphere. The real activity of the protein is however subject to debate and it is unclear whether it constitutes a real dimethylsulfoniopropionate lyase in vivo: the low activity with DMSP as substrate suggests that DMSP is not its native substrate. The protein is Dimethylsulfoniopropionate lyase DddP of Roseobacter denitrificans (strain ATCC 33942 / OCh 114) (Erythrobacter sp. (strain OCh 114)).